Consider the following 126-residue polypeptide: Large ribosomal subunit protein eL18 (126 aa).

Belongs to the eukaryotic ribosomal protein eL18 family.

This chain is Large ribosomal subunit protein eL18, found in Methanosarcina acetivorans (strain ATCC 35395 / DSM 2834 / JCM 12185 / C2A).